Here is a 617-residue protein sequence, read N- to C-terminus: MSKHKPRHFQKNKFDNRAKTSAKQQFRQVKTGVKDGVFVYKGPLTVSEFCLKTNIPTANIIKHFFLNGVPLTLNSVLSTEQLADACVNFGFDFKVETEITHDNIISNIKFDDDPTQLSPRPPIVTIMGHVDHGKTSLLDAIRQTNTAAKEFGGITQKIGAYQVKNQEGKTITFIDTPGHEAFTGMRARGAQVTDIVVLVVAGDDGLKQQTEEAISHAKSAKTPIIVFINKMDKPTANPDMVIQQLNKFDLVPEEWGGDTIFVKGSALTKEGIQELLDSILLVAEVEDYKANFNAHSSGYAIEVQTTKGLGPTATIIVKRGTLKIGDIVVLGPAWGKVRTMQDENGVHLQEAMPSKPVQISGFDIVPVAGEKFIVFDDEKDAKLIANKFREQQKQKLNTTQINEELKQKIKSKEIKVLNLIFKVDSDGSLAAIKQAMQSIDVPGMSVNIIHSGVGLISENDIMLAKASGALLFSLNLGLSQVVKNIASLQGVKVDVHYHIPKLAEEIENILKGQLEPVYEDVELGRAEVLQLWYHSKVGHIAGTLVKTGKVKRGALCKLLRRNETIYEGRVDSLKSEKNPVNQMEAGKNCGIVINGCEDIQVCDIILVYEKQEVKSKS.

Positions 1-11 (MSKHKPRHFQK) are enriched in basic residues. The interval 1–25 (MSKHKPRHFQKNKFDNRAKTSAKQQ) is disordered. In terms of domain architecture, tr-type G spans 119–288 (PRPPIVTIMG…ILLVAEVEDY (170 aa)). The interval 128–135 (GHVDHGKT) is G1. Residue 128–135 (GHVDHGKT) coordinates GTP. A G2 region spans residues 153-157 (GITQK). Residues 175 to 178 (DTPG) are G3. GTP-binding positions include 175-179 (DTPGH) and 229-232 (NKMD). Positions 229–232 (NKMD) are G4. The segment at 265–267 (SAL) is G5.

The protein belongs to the TRAFAC class translation factor GTPase superfamily. Classic translation factor GTPase family. IF-2 subfamily.

It is found in the cytoplasm. Functionally, one of the essential components for the initiation of protein synthesis. Protects formylmethionyl-tRNA from spontaneous hydrolysis and promotes its binding to the 30S ribosomal subunits. Also involved in the hydrolysis of GTP during the formation of the 70S ribosomal complex. This chain is Translation initiation factor IF-2 (infB), found in Mycoplasma pneumoniae (strain ATCC 29342 / M129 / Subtype 1) (Mycoplasmoides pneumoniae).